The primary structure comprises 369 residues: Cytochrome P450 monooxygenase apf8 (369 aa).

Position 303 (Cys-303) interacts with heme.

Belongs to the cytochrome P450 family. Heme is required as a cofactor.

It functions in the pathway secondary metabolite biosynthesis. Functionally, cytochrome P450 monooxygenase; part of the gene cluster that mediates the biosynthesis of the cyclic tetrapeptide apicidin F (APF). The non-ribosomal peptide synthetase apf1 incorporates four different amino acids to produce apicidin F: L-phenylalanine, D-pipecolic acid (D-pip), N-methoxy-L-tryptophan and L-2-aminooctanedioic acid. L-Phenylalanine is the only proteinogenic amino acid directly used by apf1. The 3 other apf1 substrates are non-proteinogenic and have to be modified by other enzymes of the cluster. Lysine is converted to delta-1-pyrroline-5-carboxylate (P5C) which is reduced to L-pipecolic acid (L-pip) by apf3. L-pip is epimerized to D-pip, probably by apf1 activity, prior to incorporation. L-Tryptophan is N-oxidyzed by one of the cytochrome P450 monooxygenases (apf7 or apf8), and further methylated at the hydroxy group by the O-methyltransferase apf6 to yield N-methoxy-L-tryptophan. The synthesis of the fourth apf1 substrate is more complex. The fatty acid synthase apf5 is involved in the synthesis of the octanoic acid backbone of L-2-aminooctanedioic acid by fixing one acetyl-CoA unit and three malonyl-CoA units. Then one of the cytochrome P450 monooxygenases (apf7 or apf8) may oxidize this backbone to 2-oxooctanoic acid. The aminotransferase apf4 is predicted to catalyze the exchange of the keto group with an amino group. The next step would be the oxidation of 2-aminooctanoic acid by one of the cytochrome P450 monooxygenases (apf7 or apf8). The last step is the oxidation of 2-amino-8-hydroxyoctanoic acid to 2-aminooctanedioic acid is catalyzed by the FAD-dependent monooxygenase apf9. This is Cytochrome P450 monooxygenase apf8 from Gibberella fujikuroi (strain CBS 195.34 / IMI 58289 / NRRL A-6831) (Bakanae and foot rot disease fungus).